The primary structure comprises 194 residues: A-type ATP synthase subunit E (194 aa).

Belongs to the V-ATPase E subunit family. Has multiple subunits with at least A(3), B(3), C, D, E, F, H, I and proteolipid K(x).

The protein localises to the cell membrane. Its function is as follows. Component of the A-type ATP synthase that produces ATP from ADP in the presence of a proton gradient across the membrane. In Saccharolobus solfataricus (strain ATCC 35092 / DSM 1617 / JCM 11322 / P2) (Sulfolobus solfataricus), this protein is A-type ATP synthase subunit E.